Consider the following 100-residue polypeptide: Large ribosomal subunit protein uL23 (100 aa).

It belongs to the universal ribosomal protein uL23 family. In terms of assembly, part of the 50S ribosomal subunit. Contacts protein L29, and trigger factor when it is bound to the ribosome.

Its function is as follows. One of the early assembly proteins it binds 23S rRNA. One of the proteins that surrounds the polypeptide exit tunnel on the outside of the ribosome. Forms the main docking site for trigger factor binding to the ribosome. The polypeptide is Large ribosomal subunit protein uL23 (Aeromonas salmonicida (strain A449)).